The sequence spans 184 residues: ATP synthase subunit b, chloroplastic (184 aa).

The chain crosses the membrane as a helical span at residues 27-49 (LATNPINLSVVLGVLIFFGKGVL).

This sequence belongs to the ATPase B chain family. F-type ATPases have 2 components, F(1) - the catalytic core - and F(0) - the membrane proton channel. F(1) has five subunits: alpha(3), beta(3), gamma(1), delta(1), epsilon(1). F(0) has four main subunits: a(1), b(1), b'(1) and c(10-14). The alpha and beta chains form an alternating ring which encloses part of the gamma chain. F(1) is attached to F(0) by a central stalk formed by the gamma and epsilon chains, while a peripheral stalk is formed by the delta, b and b' chains.

It localises to the plastid. It is found in the chloroplast thylakoid membrane. In terms of biological role, f(1)F(0) ATP synthase produces ATP from ADP in the presence of a proton or sodium gradient. F-type ATPases consist of two structural domains, F(1) containing the extramembraneous catalytic core and F(0) containing the membrane proton channel, linked together by a central stalk and a peripheral stalk. During catalysis, ATP synthesis in the catalytic domain of F(1) is coupled via a rotary mechanism of the central stalk subunits to proton translocation. Functionally, component of the F(0) channel, it forms part of the peripheral stalk, linking F(1) to F(0). The polypeptide is ATP synthase subunit b, chloroplastic (Oenothera elata subsp. hookeri (Hooker's evening primrose)).